The following is a 216-amino-acid chain: Large ribosomal subunit protein uL3 (216 aa).

Q157 is subject to N5-methylglutamine.

Belongs to the universal ribosomal protein uL3 family. As to quaternary structure, part of the 50S ribosomal subunit. Forms a cluster with proteins L14 and L19. Post-translationally, methylated by PrmB.

Its function is as follows. One of the primary rRNA binding proteins, it binds directly near the 3'-end of the 23S rRNA, where it nucleates assembly of the 50S subunit. The polypeptide is Large ribosomal subunit protein uL3 (Xanthomonas axonopodis pv. citri (strain 306)).